Here is a 417-residue protein sequence, read N- to C-terminus: Aminoacyltransferase FemB (417 aa).

The protein belongs to the FemABX family.

Its subcellular location is the cytoplasm. The catalysed reaction is MurNAc-L-Ala-D-isoglutaminyl-L-Lys-(N(6)-tri-Gly)-D-Ala-D-Ala-diphospho-di-trans,octa-cis-undecaprenyl-GlcNAc + 2 glycyl-tRNA(Gly) = MurNAc-L-Ala-D-isoglutaminyl-L-Lys-(N(6)-penta-Gly)-D-Ala-D-Ala-diphospho-di-trans,octa-cis-undecaprenyl-GlcNAc + 2 tRNA(Gly) + 2 H(+). In terms of biological role, catalyzes the incorporation of amino acid(s) into the interchain peptide bridge of peptidoglycan, using aminoacyl-tRNA as amino acid donor. This is Aminoacyltransferase FemB (femB) from Staphylococcus epidermidis.